We begin with the raw amino-acid sequence, 218 residues long: Small ribosomal subunit protein uS3c (218 aa).

Residues 43-118 (IKNYVQKNMK…KLNISITRIE (76 aa)) form the KH type-2 domain.

The protein belongs to the universal ribosomal protein uS3 family. In terms of assembly, part of the 30S ribosomal subunit.

The protein resides in the plastid. It localises to the chloroplast. The protein is Small ribosomal subunit protein uS3c (rps3) of Populus trichocarpa (Western balsam poplar).